Reading from the N-terminus, the 370-residue chain is Cytochrome b (370 aa).

4 consecutive transmembrane segments (helical) span residues 25–45 (FGSM…FLAV), 69–90 (WMMQ…YIHI), 105–125 (WLSG…GYVL), and 170–190 (FFAL…LHIL). Residues His75 and His89 each contribute to the heme b site. His174 and His188 together coordinate heme b. A ubiquinone is bound at residue His193. Transmembrane regions (helical) follow at residues 218–238 (YKDM…VSFF), 280–300 (LGGA…PFTH), 312–332 (FMQL…WTAT), and 339–358 (FTTI…ISNP).

It belongs to the cytochrome b family. In terms of assembly, the cytochrome bc1 complex contains 3 respiratory subunits (MT-CYB, CYC1 and UQCRFS1), 2 core proteins (UQCRC1 and UQCRC2) and probably 6 low-molecular weight proteins. The cofactor is heme b.

It localises to the mitochondrion inner membrane. Functionally, component of the ubiquinol-cytochrome c reductase complex (complex III or cytochrome b-c1 complex) that is part of the mitochondrial respiratory chain. The b-c1 complex mediates electron transfer from ubiquinol to cytochrome c. Contributes to the generation of a proton gradient across the mitochondrial membrane that is then used for ATP synthesis. The polypeptide is Cytochrome b (MT-CYB) (Chilabothrus strigilatus fosteri (Bimini Island boa constrictor)).